We begin with the raw amino-acid sequence, 389 residues long: Probable serine/threonine-protein kinase PBL24 (389 aa).

The interval 1-36 is disordered; it reads MSCFLGPSTNNKSRENEGSSMAAPYEQQNLPRNDRR. Residue cysteine 3 is the site of S-palmitoyl cysteine attachment. The Protein kinase domain occupies 71–348; the sequence is FRQEFLIGEG…SDVVTALSFM (278 aa). ATP is bound by residues 77-85 and lysine 100; that span reads IGEGGFGRV. The active-site Proton acceptor is the aspartate 198. Residues serine 202 and serine 232 each carry the phosphoserine modification. Threonine 238 bears the Phosphothreonine mark. Tyrosine 246 is modified (phosphotyrosine).

This sequence belongs to the protein kinase superfamily. Ser/Thr protein kinase family.

It localises to the cell membrane. The catalysed reaction is L-seryl-[protein] + ATP = O-phospho-L-seryl-[protein] + ADP + H(+). The enzyme catalyses L-threonyl-[protein] + ATP = O-phospho-L-threonyl-[protein] + ADP + H(+). Its function is as follows. May be involved in plant defense signaling. The chain is Probable serine/threonine-protein kinase PBL24 from Arabidopsis thaliana (Mouse-ear cress).